Here is a 448-residue protein sequence, read N- to C-terminus: Tryptophan dimethylallyltransferase 1 (448 aa).

Residues 80–81 (IL) and Glu-89 each bind L-tryptophan. Substrate is bound by residues Arg-100, Lys-186, and Tyr-188. Tyr-190 and Arg-249 together coordinate L-tryptophan. Positions 262, 264, 266, 348, 350, 414, and 418 each coordinate substrate.

This sequence belongs to the tryptophan dimethylallyltransferase family. Homodimer.

The enzyme catalyses L-tryptophan + dimethylallyl diphosphate = 4-(3-methylbut-2-enyl)-L-tryptophan + diphosphate. It participates in alkaloid biosynthesis; ergot alkaloid biosynthesis. Functionally, tryptophan dimethylallyltransferase; part of the gene cluster that mediates the biosynthesis of fungal ergot alkaloid. DmaW catalyzes the first step of ergot alkaloid biosynthesis by condensing dimethylallyl diphosphate (DMAP) and tryptophan to form 4-dimethylallyl-L-tryptophan. The second step is catalyzed by the methyltransferase easF that methylates 4-dimethylallyl-L-tryptophan in the presence of S-adenosyl-L-methionine, resulting in the formation of 4-dimethylallyl-L-abrine. The catalase easC and the FAD-dependent oxidoreductase easE then transform 4-dimethylallyl-L-abrine to chanoclavine-I which is further oxidized by easD in the presence of NAD(+), resulting in the formation of chanoclavine-I aldehyde. Agroclavine dehydrogenase easG then mediates the conversion of chanoclavine-I aldehyde to agroclavine via a non-enzymatic adduct reaction: the substrate is an iminium intermediate that is formed spontaneously from chanoclavine-I aldehyde in the presence of glutathione. The presence of easA is not required to complete this reaction. Further conversion of agroclavine to paspalic acid is a two-step process involving oxidation of agroclavine to elymoclavine and of elymoclavine to paspalic acid, the second step being performed by the elymoclavine oxidase cloA. Paspalic acid is then further converted to D-lysergic acid. Ergopeptines are assembled from D-lysergic acid and three different amino acids by the D-lysergyl-peptide-synthetases composed each of a monomudular and a trimodular nonribosomal peptide synthetase subunit. LpsB and lpsC encode the monomodular subunits responsible for D-lysergic acid activation and incorporation into the ergopeptine backbone. LpsA1 and A2 subunits encode the trimodular nonribosomal peptide synthetase assembling the tripeptide portion of ergopeptines. LpsA1 is responsible for formation of the major ergopeptine, ergotamine, and lpsA2 for alpha-ergocryptine, the minor ergopeptine of the total alkaloid mixture elaborated by C.purpurea. D-lysergyl-tripeptides are assembled by the nonribosomal peptide synthetases and released as N-(D-lysergyl-aminoacyl)-lactams. Cyclolization of the D-lysergyl-tripeptides is performed by the Fe(2+)/2-ketoglutarate-dependent dioxygenase easH which introduces a hydroxyl group into N-(D-lysergyl-aminoacyl)-lactam at alpha-C of the aminoacyl residue followed by spontaneous condensation with the terminal lactam carbonyl group. The polypeptide is Tryptophan dimethylallyltransferase 1 (Claviceps purpurea (Ergot fungus)).